We begin with the raw amino-acid sequence, 103 residues long: Large ribosomal subunit protein bL21 (103 aa).

It belongs to the bacterial ribosomal protein bL21 family. In terms of assembly, part of the 50S ribosomal subunit. Contacts protein L20.

This protein binds to 23S rRNA in the presence of protein L20. The chain is Large ribosomal subunit protein bL21 from Idiomarina loihiensis (strain ATCC BAA-735 / DSM 15497 / L2-TR).